A 78-amino-acid polypeptide reads, in one-letter code: Large ribosomal subunit protein uL23 (78 aa).

It belongs to the universal ribosomal protein uL23 family. In terms of assembly, part of the 50S ribosomal subunit. Contacts protein L29.

Its function is as follows. Binds to 23S rRNA. One of the proteins that surrounds the polypeptide exit tunnel on the outside of the ribosome. This chain is Large ribosomal subunit protein uL23, found in Nanoarchaeum equitans (strain Kin4-M).